We begin with the raw amino-acid sequence, 256 residues long: BI1-like protein (256 aa).

Transmembrane regions (helical) follow at residues 53-73 (VYGI…VVVL), 85-105 (PGIL…LHIY), 113-133 (LILL…SCAM), 138-158 (IVLQ…AYTF), 167-187 (FSFL…TSFI), 189-209 (MFFP…ALVF), and 228-248 (EYIL…LTIL).

It belongs to the BI1 family.

It localises to the membrane. This Arabidopsis thaliana (Mouse-ear cress) protein is BI1-like protein.